Consider the following 470-residue polypeptide: Cytochrome P450 monooxygenase FUM2 (470 aa).

Residue Cys-414 coordinates heme.

This sequence belongs to the cytochrome P450 family. It depends on heme as a cofactor.

It participates in mycotoxin biosynthesis. Cytochrome P450 monooxygenase; part of the gene cluster that mediates the biosynthesis of fumonisins B1 (FB1), B2 (FB2), B3 (FB3), and B4 (FB4), which are carcinogenic mycotoxins. Within the pathway, FUM2 performs the C-10 hydroxylation present in FB2 and FB4 and which occurs early in the biosynthesis. The biosynthesis starts with the FUM1-catalyzed carbon chain assembly from one molecule of acetyl-CoA, eight molecules of malonyl-CoA, and two molecules of methionine (in S-adenosyl form). The C18 polyketide chain is released from the enzyme by a nucleophilic attack of a carbanion, which is derived from R-carbon of alanine by decarboxylation, on the carbonyl carbon of polyketide acyl chain. This step is catalyzed by the pyridoxal 5'-phosphate-dependent aminoacyl transferase FUM8. The resultant 3-keto intermediate is then stereospecifically reduced to a 3-hydroxyl product by reductase FUM13. Subsequent oxidations at C-10 by the cytochrome P450 monooxygenase FUM2, C-14 and C-15 by FUM6, FUM12 or FUM15, tricarballylic esterification of the hydroxyl groups on C-14 and C-15 by acyltransferase FUM14, and C-5 hydroxylation by 2-keto-glutarate-dependent dioxygenase FUM3 furnish the biosynthesis of fumonisins. The tricarballylic moieties are most likely derived from the citric acid cycle, and their addition to the carbon backbone may involve FUM7, FUM10, FUM11 and FUM14. The sequence is that of Cytochrome P450 monooxygenase FUM2 from Gibberella moniliformis (strain M3125 / FGSC 7600) (Maize ear and stalk rot fungus).